A 146-amino-acid polypeptide reads, in one-letter code: Large ribosomal subunit protein uL11 (146 aa).

The protein belongs to the universal ribosomal protein uL11 family. Part of the ribosomal stalk of the 50S ribosomal subunit. Interacts with L10 and the large rRNA to form the base of the stalk. L10 forms an elongated spine to which L12 dimers bind in a sequential fashion forming a multimeric L10(L12)X complex. One or more lysine residues are methylated.

Functionally, forms part of the ribosomal stalk which helps the ribosome interact with GTP-bound translation factors. In Buchnera aphidicola subsp. Baizongia pistaciae (strain Bp), this protein is Large ribosomal subunit protein uL11.